A 304-amino-acid chain; its full sequence is Elongation factor Ts (304 aa).

The tract at residues 80 to 83 (TDFV) is involved in Mg(2+) ion dislocation from EF-Tu.

The protein belongs to the EF-Ts family.

The protein resides in the cytoplasm. In terms of biological role, associates with the EF-Tu.GDP complex and induces the exchange of GDP to GTP. It remains bound to the aminoacyl-tRNA.EF-Tu.GTP complex up to the GTP hydrolysis stage on the ribosome. This is Elongation factor Ts from Clostridium tetani (strain Massachusetts / E88).